Here is a 464-residue protein sequence, read N- to C-terminus: Type I restriction enzyme EcoKI specificity subunit (464 aa).

The protein belongs to the type-I restriction system S methylase family. As to quaternary structure, the type I restriction/modification system is composed of three polypeptides R, M and S. The restriction enzyme has stoichiometry R(2)M(2)S(1). The methyltransferase is composed of M(2)S(1). In terms of assembly, (Microbial infection) Interacts with Escherichia phage T7 protein Ocr; this interaction leads to the inhibition of the methyltransferase restriction enzyme M.EcoKI composed of M(2)S(1).

Its function is as follows. The specificity (S) subunit of a type I restriction enzyme; this subunit dictates DNA sequence specificity. The M and S subunits together form a methyltransferase (MTase) that methylates A-2 on the top and A-3 on the bottom strand of the sequence 5'-AACN(6)GTGC-3'. In the presence of the R subunit the complex can also act as an endonuclease, binding to the same target sequence but cutting the DNA some distance from this site. Whether the DNA is cut or modified depends on the methylation state of the target sequence. When the target site is unmodified, the DNA is cut. When the target site is hemimethylated, the complex acts as a maintenance MTase modifying the DNA so that both strands become methylated. After locating a non-methylated recognition site, the enzyme complex serves as a molecular motor that translocates DNA in an ATP-dependent manner until a collision occurs that triggers cleavage. This Escherichia coli (strain K12) protein is Type I restriction enzyme EcoKI specificity subunit.